A 124-amino-acid polypeptide reads, in one-letter code: Small ribosomal subunit protein uS12cz/uS12cy (124 aa).

Belongs to the universal ribosomal protein uS12 family. In terms of assembly, part of the 30S ribosomal subunit.

It is found in the plastid. The protein localises to the chloroplast. Its function is as follows. With S4 and S5 plays an important role in translational accuracy. Located at the interface of the 30S and 50S subunits. The polypeptide is Small ribosomal subunit protein uS12cz/uS12cy (rps12-A) (Zea mays (Maize)).